A 276-amino-acid chain; its full sequence is N-acyl homoserine lactonase AiiB (276 aa).

Residues histidine 111, histidine 113, histidine 116, histidine 191, aspartate 213, and histidine 259 each contribute to the Zn(2+) site.

It belongs to the metallo-beta-lactamase superfamily. The cofactor is Zn(2+).

It carries out the reaction an N-acyl-L-homoserine lactone + H2O = an N-acyl-L-homoserine + H(+). This Agrobacterium fabrum (strain C58 / ATCC 33970) (Agrobacterium tumefaciens (strain C58)) protein is N-acyl homoserine lactonase AiiB.